Here is a 140-residue protein sequence, read N- to C-terminus: Transcription antitermination protein NusB (140 aa).

It belongs to the NusB family.

Its function is as follows. Involved in transcription antitermination. Required for transcription of ribosomal RNA (rRNA) genes. Binds specifically to the boxA antiterminator sequence of the ribosomal RNA (rrn) operons. This is Transcription antitermination protein NusB from Pseudoalteromonas atlantica (strain T6c / ATCC BAA-1087).